A 192-amino-acid polypeptide reads, in one-letter code: tRNA (pseudouridine(54)-N(1))-methyltransferase (192 aa).

Leucine 114 and glycine 138 together coordinate S-adenosyl-L-methionine.

Belongs to the methyltransferase superfamily. TrmY family. In terms of assembly, homodimer.

Its subcellular location is the cytoplasm. It carries out the reaction pseudouridine(54) in tRNA + S-adenosyl-L-methionine = N(1)-methylpseudouridine(54) in tRNA + S-adenosyl-L-homocysteine + H(+). Its function is as follows. Specifically catalyzes the N1-methylation of pseudouridine at position 54 (Psi54) in tRNAs. The sequence is that of tRNA (pseudouridine(54)-N(1))-methyltransferase from Aeropyrum pernix (strain ATCC 700893 / DSM 11879 / JCM 9820 / NBRC 100138 / K1).